A 424-amino-acid chain; its full sequence is Glutamyl-tRNA reductase (424 aa).

Residues 49-52, Ser105, 110-112, and Gln116 contribute to the substrate site; these read TCNR and EPQ. Catalysis depends on Cys50, which acts as the Nucleophile. Residue 185-190 coordinates NADP(+); that stretch reads GSGETA.

Belongs to the glutamyl-tRNA reductase family. As to quaternary structure, homodimer.

The catalysed reaction is (S)-4-amino-5-oxopentanoate + tRNA(Glu) + NADP(+) = L-glutamyl-tRNA(Glu) + NADPH + H(+). The protein operates within porphyrin-containing compound metabolism; protoporphyrin-IX biosynthesis; 5-aminolevulinate from L-glutamyl-tRNA(Glu): step 1/2. Functionally, catalyzes the NADPH-dependent reduction of glutamyl-tRNA(Glu) to glutamate 1-semialdehyde (GSA). This chain is Glutamyl-tRNA reductase, found in Legionella pneumophila (strain Paris).